Here is a 228-residue protein sequence, read N- to C-terminus: Thermonuclease (228 aa).

The N-terminal stretch at 1-23 (MTEYLLSAGICMAIVSILLIGMA) is a signal peptide. Residues 24–60 (ISNVSKEQYAKRFFFFATSCLVLTLVVASSLSSSANA) constitute a propeptide that is removed on maturation. Ca(2+) is bound at residue D100. Residue R114 is part of the active site. Residues D119 and T120 each coordinate Ca(2+). Residues E122 and R166 contribute to the active site.

The protein belongs to the thermonuclease family. It depends on Ca(2+) as a cofactor.

It is found in the secreted. It carries out the reaction Endonucleolytic cleavage to nucleoside 3'-phosphates and 3'-phosphooligonucleotide end-products.. In terms of biological role, enzyme that catalyzes the hydrolysis of both DNA and RNA at the 5' position of the phosphodiester bond. This is Thermonuclease (nuc) from Staphylococcus aureus (strain MRSA252).